Reading from the N-terminus, the 42-residue chain is Beta-2-microglobulin (42 aa).

Residues 5–42 enclose the Ig-like C1-type domain; it reads PKIQVYSRHPAZBGKPBFLBCYVSGFHPXZIZIBLLKB.

In terms of assembly, heterodimer of an alpha chain and a beta chain. Beta-2-microglobulin is the beta-chain of major histocompatibility complex class I molecules.

The protein resides in the secreted. Its function is as follows. Component of the class I major histocompatibility complex (MHC). Involved in the presentation of peptide antigens to the immune system. This Canis lupus familiaris (Dog) protein is Beta-2-microglobulin (B2M).